Consider the following 187-residue polypeptide: Protein Flattop (187 aa).

Residues 97–187 (THSGHGIHTH…TPQLEREEPQ (91 aa)) form a disordered region. The segment covering 122–131 (EGDQTCNAPT) has biased composition (polar residues). Over residues 169–187 (KRREQSLEETPQLEREEPQ) the composition is skewed to basic and acidic residues.

The protein belongs to the Flattop family.

It localises to the cytoplasm. Its subcellular location is the cytoskeleton. The protein resides in the cilium basal body. The protein localises to the cell projection. It is found in the cilium. It localises to the apical cell membrane. Its subcellular location is the cilium axoneme. Its function is as follows. Microtubule inner protein (MIP) part of the dynein-decorated doublet microtubules (DMTs) in cilia axoneme. Acts as a regulator of cilium basal body docking and positioning in mono- and multiciliated cells. Regulates basal body docking and cilia formation in multiciliated lung cells. Regulates kinocilium positioning and stereocilia bundle morphogenesis in the inner ear. This chain is Protein Flattop, found in Salmo salar (Atlantic salmon).